Consider the following 88-residue polypeptide: Small ribosomal subunit protein eS21 (88 aa).

The protein belongs to the eukaryotic ribosomal protein eS21 family. Component of the 40S small ribosomal subunit.

The protein resides in the cytoplasm. It localises to the cytosol. Its subcellular location is the rough endoplasmic reticulum. The protein is Small ribosomal subunit protein eS21 (rps-21) of Caenorhabditis elegans.